The sequence spans 253 residues: MDDYLVSIIMPSYNAEHTISASISSVLKQTYANWELLVCDDDSSDNTRFKVLEFSDSRIKLLTNEYAKGAAGARNTALKYASGRFIAFLDSDDIWIANKLEMQISMMLKNNISFMYGNYEIINNNSIVGKFVAPQKITYNKLLKNCGIGCLTVVLDRTLLNPFSFPFVHKEDYYLWLSILKDNNISAINCGFICSKYRLSQSSISSNKFKELKRQWDVLGDFVENPLARIYYLLNYIVIGIKKHAFDYKNGKK.

This sequence belongs to the glycosyltransferase 2 family. Mn(2+) is required as a cofactor. It depends on Mg(2+) as a cofactor.

It localises to the cell inner membrane. The catalysed reaction is N-acetyl-alpha-D-glucosaminyl-di-trans,octa-cis-undecaprenyl diphosphate + UDP-alpha-D-glucose = beta-D-Glc-(1-&gt;3)-alpha-D-GlcNAc-di-trans,octa-cis-undecaprenyl diphosphate + UDP + H(+). Its pathway is bacterial outer membrane biogenesis; lipopolysaccharide biosynthesis. Its function is as follows. Catalyzes the addition of Glc, the second sugar moiety of the O152-antigen repeating unit, to GlcNAc-pyrophosphate-undecaprenol. This chain is UDP-Glc:alpha-D-GlcNAc-diphosphoundecaprenol beta-1,3-glucosyltransferase WfgD (wfgD), found in Escherichia coli.